Consider the following 758-residue polypeptide: Photosystem I P700 chlorophyll a apoprotein A1 (758 aa).

A run of 8 helical transmembrane segments spans residues 78 to 101 (VFSAHFGQLSIIFLWLSGMYFHGA), 164 to 187 (LYCTAIGALVFAGLMLFAGWFHYH), 203 to 227 (LNHHLAGLLGLGSLSWARHQVHVSL), 299 to 317 (IAHHHLAIAILFLIAGHMY), 354 to 377 (WHAQLSINLAMLGSLTIVVAQHMY), 393 to 419 (LSLFTHHMWIGGFLIVGAAAHAAIFMV), 441 to 463 (AIISHLNWVCIFLGFHSFGLYIH), and 539 to 557 (FLVHHIHAFTIHVTVLILL). Residues Cys-581 and Cys-590 each contribute to the [4Fe-4S] cluster site. 2 consecutive transmembrane segments (helical) span residues 597 to 618 (HVFLGLFWMYNSISVVIFHFSW) and 672 to 694 (LSAYGLFFLGAHFVWAFSLMFLF). Residue His-683 coordinates chlorophyll a'. Met-691 and Tyr-699 together coordinate chlorophyll a. Residue Trp-700 participates in phylloquinone binding. A helical membrane pass occupies residues 732–753 (AVGVTHYLLGGIATTWAFFLAR).

The protein belongs to the PsaA/PsaB family. In terms of assembly, the PsaA/B heterodimer binds the P700 chlorophyll special pair and subsequent electron acceptors. PSI consists of a core antenna complex that captures photons, and an electron transfer chain that converts photonic excitation into a charge separation. The eukaryotic PSI reaction center is composed of at least 11 subunits. The cofactor is P700 is a chlorophyll a/chlorophyll a' dimer, A0 is one or more chlorophyll a, A1 is one or both phylloquinones and FX is a shared 4Fe-4S iron-sulfur center..

It localises to the plastid. It is found in the chloroplast thylakoid membrane. It catalyses the reaction reduced [plastocyanin] + hnu + oxidized [2Fe-2S]-[ferredoxin] = oxidized [plastocyanin] + reduced [2Fe-2S]-[ferredoxin]. Functionally, psaA and PsaB bind P700, the primary electron donor of photosystem I (PSI), as well as the electron acceptors A0, A1 and FX. PSI is a plastocyanin-ferredoxin oxidoreductase, converting photonic excitation into a charge separation, which transfers an electron from the donor P700 chlorophyll pair to the spectroscopically characterized acceptors A0, A1, FX, FA and FB in turn. Oxidized P700 is reduced on the lumenal side of the thylakoid membrane by plastocyanin. The protein is Photosystem I P700 chlorophyll a apoprotein A1 of Pisum sativum (Garden pea).